The following is a 345-amino-acid chain: ATP-dependent (S)-NAD(P)H-hydrate dehydratase (345 aa).

The region spanning 9 to 332 (ILSLARSMIP…DMVGEVYEEV (324 aa)) is the YjeF C-terminal domain. Residues glycine 113 and 170-176 (NVMEFKR) contribute to the (6S)-NADPHX site. ATP contacts are provided by residues 208–212 (KGPSD) and 241–250 (GGLKRVGGQG). Aspartate 251 is a binding site for (6S)-NADPHX.

It belongs to the NnrD/CARKD family. Mg(2+) is required as a cofactor.

Its subcellular location is the cytoplasm. It catalyses the reaction (6S)-NADHX + ATP = ADP + phosphate + NADH + H(+). The catalysed reaction is (6S)-NADPHX + ATP = ADP + phosphate + NADPH + H(+). Its function is as follows. Catalyzes the dehydration of the S-form of NAD(P)HX at the expense of ATP, which is converted to ADP. Together with NAD(P)HX epimerase, which catalyzes the epimerization of the S- and R-forms, the enzyme allows the repair of both epimers of NAD(P)HX, a damaged form of NAD(P)H that is a result of enzymatic or heat-dependent hydration. This chain is ATP-dependent (S)-NAD(P)H-hydrate dehydratase, found in Cryptococcus neoformans var. neoformans serotype D (strain JEC21 / ATCC MYA-565) (Filobasidiella neoformans).